The sequence spans 353 residues: Quinolinate synthase (353 aa).

Residues H47 and S68 each contribute to the iminosuccinate site. Residue C113 coordinates [4Fe-4S] cluster. Iminosuccinate-binding positions include 139–141 and S156; that span reads YAN. C200 is a [4Fe-4S] cluster binding site. Iminosuccinate is bound by residues 226 to 228 and T243; that span reads HPE. C297 serves as a coordination point for [4Fe-4S] cluster.

The protein belongs to the quinolinate synthase family. Type 1 subfamily. Requires [4Fe-4S] cluster as cofactor.

It localises to the cytoplasm. The catalysed reaction is iminosuccinate + dihydroxyacetone phosphate = quinolinate + phosphate + 2 H2O + H(+). It functions in the pathway cofactor biosynthesis; NAD(+) biosynthesis; quinolinate from iminoaspartate: step 1/1. Catalyzes the condensation of iminoaspartate with dihydroxyacetone phosphate to form quinolinate. The chain is Quinolinate synthase from Pectobacterium atrosepticum (strain SCRI 1043 / ATCC BAA-672) (Erwinia carotovora subsp. atroseptica).